We begin with the raw amino-acid sequence, 486 residues long: Malonate-semialdehyde dehydrogenase (486 aa).

NAD(+) is bound by residues phenylalanine 154, lysine 178, glutamate 181, arginine 182, and serine 231. Catalysis depends on cysteine 286, which acts as the Nucleophile. Glutamate 386 serves as a coordination point for NAD(+).

It belongs to the aldehyde dehydrogenase family. IolA subfamily. As to quaternary structure, homotetramer.

It catalyses the reaction 3-oxopropanoate + NAD(+) + CoA + H2O = hydrogencarbonate + acetyl-CoA + NADH + H(+). The catalysed reaction is 2-methyl-3-oxopropanoate + NAD(+) + CoA + H2O = propanoyl-CoA + hydrogencarbonate + NADH + H(+). Its pathway is polyol metabolism; myo-inositol degradation into acetyl-CoA; acetyl-CoA from myo-inositol: step 7/7. In terms of biological role, catalyzes the oxidation of malonate semialdehyde (MSA) and methylmalonate semialdehyde (MMSA) into acetyl-CoA and propanoyl-CoA, respectively. Is involved in a myo-inositol catabolic pathway. Bicarbonate, and not CO2, is the end-product of the enzymatic reaction. This Bacillus cereus (strain B4264) protein is Malonate-semialdehyde dehydrogenase.